Reading from the N-terminus, the 303-residue chain is Ferrochelatase (303 aa).

His-185 and Glu-262 together coordinate Fe cation.

The protein belongs to the ferrochelatase family.

It localises to the cytoplasm. The catalysed reaction is heme b + 2 H(+) = protoporphyrin IX + Fe(2+). It functions in the pathway porphyrin-containing compound metabolism; protoheme biosynthesis; protoheme from protoporphyrin-IX: step 1/1. In terms of biological role, catalyzes the ferrous insertion into protoporphyrin IX. The protein is Ferrochelatase of Campylobacter jejuni (strain RM1221).